A 271-amino-acid chain; its full sequence is MKLVFYGAGNMAQAIFTGIINSSNLDANDIYLTNKSNEQALKAFAEKLGVNYSYDDATLLKDADYVFLGTKPHDFDALATRIKPHITKDNCFISIMAGIPIDYIKQQLECQNPVARIMPNTNAQVGHSVTGISFSNNFDPKSKDEINDLVKAFGSVIEVSEDHLHQVTAITGSGPAFLYHVFEQYVKAGTKLGLEKEQVEESIRNLIIGTSKMIERSDLSMAQLRKNITSKGGTTQAGLDTLSQYDLVSIFEDCLNAAVDRSIELSNVEDQ.

This sequence belongs to the pyrroline-5-carboxylate reductase family.

The protein localises to the cytoplasm. It carries out the reaction L-proline + NADP(+) = (S)-1-pyrroline-5-carboxylate + NADPH + 2 H(+). The catalysed reaction is L-proline + NAD(+) = (S)-1-pyrroline-5-carboxylate + NADH + 2 H(+). Its pathway is amino-acid biosynthesis; L-proline biosynthesis; L-proline from L-glutamate 5-semialdehyde: step 1/1. Its function is as follows. Catalyzes the reduction of 1-pyrroline-5-carboxylate (PCA) to L-proline. The protein is Pyrroline-5-carboxylate reductase of Staphylococcus aureus (strain Mu50 / ATCC 700699).